The chain runs to 725 residues: Ribonucleoside-diphosphate reductase subunit alpha (725 aa).

Substrate contacts are provided by residues threonine 172, 188 to 189 (SC), glycine 217, 397 to 401 (NLCSE), and 599 to 603 (PTGSI). A disulfide bond links cysteine 189 and cysteine 426. The active-site Proton acceptor is the asparagine 397. Cysteine 399 functions as the Cysteine radical intermediate in the catalytic mechanism. The active-site Proton acceptor is the glutamate 401.

This sequence belongs to the ribonucleoside diphosphate reductase large chain family. Tetramer of two alpha and two beta subunits. Co-immunoprecipitates with DarG in the presence and absence of darT.

It carries out the reaction a 2'-deoxyribonucleoside 5'-diphosphate + [thioredoxin]-disulfide + H2O = a ribonucleoside 5'-diphosphate + [thioredoxin]-dithiol. With respect to regulation, under complex allosteric control mediated by deoxynucleoside triphosphates and ATP binding. The type of nucleotide bound at the specificity site determines substrate preference. It seems probable that ATP makes the enzyme reduce CDP and UDP, dGTP favors ADP reduction and dTTP favors GDP reduction. CDP reduction is stimulated by dATP. Its function is as follows. Provides the precursors necessary for DNA synthesis. Catalyzes the biosynthesis of deoxyribonucleotides from the corresponding ribonucleotides. When coexpressed in E.coli with nrdF2 the 2 proteins complement a temperature-sensitive E.coli mutant, however coexpression with nrdF1 does not complement. The polypeptide is Ribonucleoside-diphosphate reductase subunit alpha (nrdE) (Mycobacterium tuberculosis (strain ATCC 25618 / H37Rv)).